Here is a 483-residue protein sequence, read N- to C-terminus: Attachment protein G3P (483 aa).

Positions 1 to 20 (MGLHYLFGFCLALFSFSAIA) are cleaved as a signal peptide. Disordered regions lie at residues 324-343 (EVSD…TTTE) and 354-378 (SETN…GSGS). Residues 326-343 (SDNNSSQPSISVNETTTE) are compositionally biased toward polar residues. A helical transmembrane segment spans residues 460-480 (IIYFMVMASAYVLAAYITLGV).

This sequence belongs to the inovirus G3P protein family. As to quaternary structure, interacts with G6P; this interaction is required for proper integration of G3P and G6P into the virion. Interacts with G8P. Interacts with the tip of the host pilus.

Its subcellular location is the virion. The protein localises to the host membrane. Its function is as follows. Plays essential roles both in the penetration of the viral genome into the bacterial host via pilus retraction and in the extrusion process. During the initial step of infection, G3P mediates adsorption of the phage to its primary receptor, the tip of host type IV PAO pilus. Attachment of the phage causes pilus retraction bringing the viral particle into close proximity of the host cell inner membrane. Subsequent interaction with a secondary host entry receptor induces penetration of the viral DNA into the host cytoplasm. In the extrusion process, G3P mediates the release of the membrane-anchored virion from the cell via its C-terminal domain. This is Attachment protein G3P (III) from Pseudomonas phage Pf3 (Bacteriophage Pf3).